Here is an 878-residue protein sequence, read N- to C-terminus: Probable di- and tripeptidase DUG2 (878 aa).

5 WD repeats span residues 18-57, 68-107, 235-274, 282-322, and 362-405; these read NHAF…LIHT, HTRS…IRDD, RFNQ…GQNT, DKID…IIST, and PQQG…SAVP. A Zn(2+)-binding site is contributed by His-520. The active site involves Asp-522. Asp-553 is a binding site for Zn(2+). The active-site Proton acceptor is the Glu-586. Residue Glu-587 coordinates Zn(2+). The stretch at 608–651 is one WD 6 repeat; sequence IDWILLSNSTWVDQEHPCLNYGLRGVINAQIKVWSDKPDGHSGL. His-853 lines the Zn(2+) pocket.

The protein belongs to the peptidase M20A family. Component of the GSH degradosomal complex composed of at least DUG1, DUG2 and DUG3. Zn(2+) is required as a cofactor.

Its subcellular location is the cytoplasm. The protein localises to the nucleus. In terms of biological role, component of the GSH degradosomal complex involved in the degradation of glutathione (GSH) and other peptides containing a gamma-glu-X bond. The chain is Probable di- and tripeptidase DUG2 (DUG2) from Saccharomyces cerevisiae (strain ATCC 204508 / S288c) (Baker's yeast).